A 693-amino-acid chain; its full sequence is TGF-beta-activated kinase 1 and MAP3K7-binding protein 2 (693 aa).

Residues 8 to 51 (IDFQVLHDLRQKFPEVPEVVVSRCMLQNNNNLDACCAVLSQEST) form the CUE domain. The tract at residues 91 to 130 (GREGSRMNGSRTLTHSISDGQLQGGQSNSELFQQEPQTAP) is disordered. Over residues 97–130 (MNGSRTLTHSISDGQLQGGQSNSELFQQEPQTAP) the composition is skewed to polar residues. At Arg-173 the chain carries Asymmetric dimethylarginine. The interval 219 to 310 (ITTPGGTTRQ…SGSSQSSAHS (92 aa)) is disordered. Low complexity predominate over residues 220–231 (TTPGGTTRQTQQ). Over residues 232-282 (HSGWVSQFNPMNPQQVYQPSQPGPWTTCPASNPLSHTSSQQPNQQGHQTSH) the composition is skewed to polar residues. The segment covering 286-310 (PISSPTTSQPPTIHSSGSSQSSAHS) has biased composition (low complexity). Residue Lys-329 forms a Glycyl lysine isopeptide (Lys-Gly) (interchain with G-Cter in SUMO) linkage. Positions 330–381 (LEPPQRNNSSKLRSSGPRTSSTSSSVNSQTLNRNQPTVYIAASPPNTDELMS) are disordered. Positions 343–359 (SSGPRTSSTSSSVNSQT) are enriched in low complexity. Residues Ser-372, Ser-450, Ser-482, and Ser-524 each carry the phosphoserine modification. A coiled-coil region spans residues 532 to 619 (YTQALLVHQK…TKEIDLFQAR (88 aa)). Residue Lys-562 forms a Glycyl lysine isopeptide (Lys-Gly) (interchain with G-Cter in SUMO) linkage. Ser-582 is subject to Phosphoserine. Lys-611 is covalently cross-linked (Glycyl lysine isopeptide (Lys-Gly) (interchain with G-Cter in ubiquitin)). The tract at residues 642–663 (PPKPKDQRSIIKTPKTQDTEDD) is disordered. A RanBP2-type zinc finger spans residues 663–693 (DEGAQWNCTACTFLNHPALIRCEQCEMPRHF). Position 673 is a (Microbial infection) S-methylcysteine (Cys-673). The interaction with polyubiquitin stretch occupies residues 675 to 685 (FLNHPALIRCE).

In terms of assembly, interacts with MAP3K7 and TRAF6. Identified in the TRIKA2 complex composed of MAP3K7, TAB1 and TAB2. Binds 'Lys-63'-linked polyubiquitin chains. Interacts with NCOR1 and HDAC3 to form a ternary complex. Interacts (via C-terminal) with NUMBL (via PTB domain). Interacts (via the C-terminus) with DYNC2I2 (via WD domains). Interacts with RBCK1. Interacts with TRIM5. Interacts with TRIM38 (via B30.2/SPRY domain), leading to its translocation to lysosomes and degradation. Interacts with ASB1; this interaction promotes TAB2 stability. In terms of processing, degraded in a lysosome-dependent manner following interaction with TRIM38. Post-translationally, SUMOylated by TRIM60; leading to inhibition of MAPK/NF-kappaB activation and the innate immune response. Ubiquitinated; following IL1 stimulation or TRAF6 overexpression. Ubiquitination involves RBCK1 leading to proteasomal degradation. Ubiquitinated at Lys-611 by TRIM45 leading to proteasomal degradation. In terms of processing, phosphorylated. Post-translationally, (Microbial infection) Methylated at Cys-673 by enteropathogenic E.coli protein NleE or S.flexneri protein OspZ: methylation disrupts zinc-binding and ability to bind 'Lys-63'-linked ubiquitin, leading to NF-kappa-B inactivation. In terms of tissue distribution, widely expressed. In the embryo, expressed in the ventricular trabeculae, endothelial cells of the conotruncal cushions of the outflow tract and in the endothelial cells lining the developing aortic valves.

Its subcellular location is the membrane. It localises to the endosome membrane. The protein localises to the lysosome membrane. It is found in the cytoplasm. The protein resides in the cytosol. In terms of biological role, adapter required to activate the JNK and NF-kappa-B signaling pathways through the specific recognition of 'Lys-63'-linked polyubiquitin chains by its RanBP2-type zinc finger (NZF). Acts as an adapter linking MAP3K7/TAK1 and TRAF6 to 'Lys-63'-linked polyubiquitin chains. The RanBP2-type zinc finger (NZF) specifically recognizes Lys-63'-linked polyubiquitin chains unanchored or anchored to the substrate proteins such as RIPK1/RIP1 and RIPK2: this acts as a scaffold to organize a large signaling complex to promote autophosphorylation of MAP3K7/TAK1, and subsequent activation of I-kappa-B-kinase (IKK) core complex by MAP3K7/TAK1. Also recognizes and binds Lys-63'-linked polyubiquitin chains of heterotypic 'Lys-63'-/'Lys-48'-linked branched ubiquitin chains. Regulates the IL1-mediated translocation of NCOR1 out of the nucleus. Involved in heart development. The sequence is that of TGF-beta-activated kinase 1 and MAP3K7-binding protein 2 from Homo sapiens (Human).